Consider the following 902-residue polypeptide: HTH-type transcriptional regulator MalT (902 aa).

Position 39 to 46 (39 to 46 (SPAGYGKT)) interacts with ATP. The HTH luxR-type domain maps to 832 to 897 (ELVRTSPLTQ…EAIVTAENLL (66 aa)). A DNA-binding region (H-T-H motif) is located at residues 856–875 (NEQIAQELDVAGTTIKTHIR).

It belongs to the MalT family. As to quaternary structure, monomer in solution. Oligomerizes to an active state in the presence of the positive effectors ATP and maltotriose.

With respect to regulation, activated by ATP and maltotriose, which are both required for DNA binding. Functionally, positively regulates the transcription of the maltose regulon whose gene products are responsible for uptake and catabolism of malto-oligosaccharides. Specifically binds to the promoter region of its target genes, recognizing a short DNA motif called the MalT box. In Vibrio campbellii (strain ATCC BAA-1116), this protein is HTH-type transcriptional regulator MalT.